We begin with the raw amino-acid sequence, 631 residues long: Quinoprotein alcohol dehydrogenase PedE (631 aa).

Positions 1 to 33 (MTIRSLPALSPLALSVRVLLMAGSLALGNVATA) are cleaved as a signal peptide. Positions 53, 56, and 59 each coordinate Ca(2+). Glu103 lines the pyrroloquinoline quinone pocket. The cysteines at positions 147 and 148 are disulfide-linked. Residues Arg153, Thr197, and 215 to 217 (HGS) each bind pyrroloquinoline quinone. Glu221 contributes to the Ca(2+) binding site. The tract at residues 250–286 (GRLNGKDSTPTGDVKAPSWPDDPTTETGKVEAWSHGG) is disordered. Asn308 and Asp358 together coordinate Ca(2+). Residue Asp358 is the Proton acceptor of the active site. Residue Arg386 coordinates pyrroloquinoline quinone. Residues 421-443 (GRPVENPGQRPAKPLPGETKGKP) are disordered. The pyrroloquinoline quinone site is built by Trp531 and Ala595.

It belongs to the bacterial PQQ dehydrogenase family. As to quaternary structure, homodimer. Interacts with cytochrome c550. It depends on pyrroloquinoline quinone as a cofactor. Ca(2+) is required as a cofactor. The disulfide ring formed between the two adjacent cysteine residues Cys-147 and Cys-148 is essential for efficient electron transfer at pH 7 from PedE to its natural electron acceptor cytochrome c550.

Its subcellular location is the periplasm. It carries out the reaction a primary alcohol + 2 Fe(III)-[cytochrome c] = an aldehyde + 2 Fe(II)-[cytochrome c] + 2 H(+). It catalyses the reaction ethanol + 2 Fe(III)-[cytochrome c] = acetaldehyde + 2 Fe(II)-[cytochrome c] + 2 H(+). The enzyme catalyses butan-1-ol + 2 Fe(III)-[cytochrome c] = butanal + 2 Fe(II)-[cytochrome c] + 2 H(+). The catalysed reaction is butan-2-ol + 2 Fe(III)-[cytochrome c] = butan-2-one + 2 Fe(II)-[cytochrome c] + 2 H(+). It carries out the reaction 2-phenylethanol + 2 Fe(III)-[cytochrome c] = 2-phenylacetaldehyde + 2 Fe(II)-[cytochrome c] + 2 H(+). It catalyses the reaction octan-1-ol + 2 Fe(III)-[cytochrome c] = octanal + 2 Fe(II)-[cytochrome c] + 2 H(+). The enzyme catalyses hexan-1-ol + 2 Fe(III)-[cytochrome c] = hexanal + 2 Fe(II)-[cytochrome c] + 2 H(+). The catalysed reaction is cinnamyl alcohol + 2 Fe(III)-[cytochrome c] = cinnamaldehyde + 2 Fe(II)-[cytochrome c] + 2 H(+). It carries out the reaction farnesol + 2 Fe(III)-[cytochrome c] = farnesal + 2 Fe(II)-[cytochrome c] + 2 H(+). It catalyses the reaction an aldehyde + 2 Fe(III)-[cytochrome c] + H2O = a carboxylate + 2 Fe(II)-[cytochrome c] + 3 H(+). The enzyme catalyses acetaldehyde + 2 Fe(III)-[cytochrome c] + H2O = 2 Fe(II)-[cytochrome c] + acetate + 3 H(+). The catalysed reaction is butanal + 2 Fe(III)-[cytochrome c] + H2O = butanoate + 2 Fe(II)-[cytochrome c] + 3 H(+). It carries out the reaction hexanal + 2 Fe(III)-[cytochrome c] + H2O = hexanoate + 2 Fe(II)-[cytochrome c] + 3 H(+). It catalyses the reaction octanal + 2 Fe(III)-[cytochrome c] + H2O = octanoate + 2 Fe(II)-[cytochrome c] + 3 H(+). Alcohol dehydrogenase that catalyzes the oxidation of a range of substrates, including linear and aromatic primary and secondary alcohols, as well as aldehydes, allowing bacterial growth with a variety of volatile organic compounds (VOCs) as carbon and energy sources. Uses a specific inducible cytochrome c550, encoded by the adjacent gene in the locus, as electron acceptor. This chain is Quinoprotein alcohol dehydrogenase PedE, found in Pseudomonas putida (strain ATCC 47054 / DSM 6125 / CFBP 8728 / NCIMB 11950 / KT2440).